The following is a 213-amino-acid chain: Thymidylate kinase (213 aa).

9-16 contributes to the ATP binding site; it reads GLEGAGKS.

It belongs to the thymidylate kinase family.

The catalysed reaction is dTMP + ATP = dTDP + ADP. Its function is as follows. Phosphorylation of dTMP to form dTDP in both de novo and salvage pathways of dTTP synthesis. This chain is Thymidylate kinase, found in Aeromonas hydrophila subsp. hydrophila (strain ATCC 7966 / DSM 30187 / BCRC 13018 / CCUG 14551 / JCM 1027 / KCTC 2358 / NCIMB 9240 / NCTC 8049).